The following is a 167-amino-acid chain: uncharacterized protein (167 aa).

This is an uncharacterized protein from Acanthamoeba polyphaga (Amoeba).